Reading from the N-terminus, the 351-residue chain is Uroporphyrinogen decarboxylase (351 aa).

Residues 25–29 (RQAGR), D74, Y151, S206, and H325 contribute to the substrate site.

It belongs to the uroporphyrinogen decarboxylase family. As to quaternary structure, homodimer.

It localises to the cytoplasm. The catalysed reaction is uroporphyrinogen III + 4 H(+) = coproporphyrinogen III + 4 CO2. It participates in porphyrin-containing compound metabolism; protoporphyrin-IX biosynthesis; coproporphyrinogen-III from 5-aminolevulinate: step 4/4. Catalyzes the decarboxylation of four acetate groups of uroporphyrinogen-III to yield coproporphyrinogen-III. The protein is Uroporphyrinogen decarboxylase of Pelodictyon phaeoclathratiforme (strain DSM 5477 / BU-1).